The chain runs to 457 residues: tRNA modification GTPase MnmE (457 aa).

3 residues coordinate (6S)-5-formyl-5,6,7,8-tetrahydrofolate: arginine 23, glutamate 85, and arginine 124. The 157-residue stretch at 220 to 376 (GALVVLAGQV…LVTAIRAAVL (157 aa)) folds into the TrmE-type G domain. Asparagine 230 provides a ligand contact to K(+). Residues 230-235 (NAGKSS), 249-255 (TDLPGTT), and 274-277 (DTAG) each bind GTP. Serine 234 is a binding site for Mg(2+). K(+) contacts are provided by threonine 249, leucine 251, and threonine 254. Residue threonine 255 participates in Mg(2+) binding. Residue lysine 457 coordinates (6S)-5-formyl-5,6,7,8-tetrahydrofolate.

The protein belongs to the TRAFAC class TrmE-Era-EngA-EngB-Septin-like GTPase superfamily. TrmE GTPase family. In terms of assembly, homodimer. Heterotetramer of two MnmE and two MnmG subunits. It depends on K(+) as a cofactor.

Its subcellular location is the cytoplasm. In terms of biological role, exhibits a very high intrinsic GTPase hydrolysis rate. Involved in the addition of a carboxymethylaminomethyl (cmnm) group at the wobble position (U34) of certain tRNAs, forming tRNA-cmnm(5)s(2)U34. The polypeptide is tRNA modification GTPase MnmE (Nitratidesulfovibrio vulgaris (strain DP4) (Desulfovibrio vulgaris)).